The following is a 609-amino-acid chain: UvrABC system protein C (609 aa).

The region spanning 15–93 (SSAGVYRMYD…IKQYMPKYNV (79 aa)) is the GIY-YIG domain. In terms of domain architecture, UVR spans 202 to 237 (QQVVTNLVTKMEQAAEEFHYEQAAAYRDQITALRKV).

This sequence belongs to the UvrC family. As to quaternary structure, interacts with UvrB in an incision complex.

The protein localises to the cytoplasm. In terms of biological role, the UvrABC repair system catalyzes the recognition and processing of DNA lesions. UvrC both incises the 5' and 3' sides of the lesion. The N-terminal half is responsible for the 3' incision and the C-terminal half is responsible for the 5' incision. The protein is UvrABC system protein C of Shewanella denitrificans (strain OS217 / ATCC BAA-1090 / DSM 15013).